Reading from the N-terminus, the 644-residue chain is Exoribonuclease 2 (644 aa).

Residues 189–516 enclose the RNB domain; the sequence is RQDLTALNFV…NHRLLKAVIK (328 aa). In terms of domain architecture, S1 motif spans 561-643; sequence NTRFAAEIID…ETRSIIARPA (83 aa).

It belongs to the RNR ribonuclease family. RNase II subfamily.

It is found in the cytoplasm. It catalyses the reaction Exonucleolytic cleavage in the 3'- to 5'-direction to yield nucleoside 5'-phosphates.. Involved in mRNA degradation. Hydrolyzes single-stranded polyribonucleotides processively in the 3' to 5' direction. The sequence is that of Exoribonuclease 2 from Salmonella dublin (strain CT_02021853).